The chain runs to 88 residues: Cytochrome c oxidase subunit 6B2 (88 aa).

Residues 1 to 22 (MLDVEAQEPPKGKWSTPPFDPR) form a disordered region. Residues 29–75 (IRNCYQNFLDYHRCLKTRTRRGKSTQPCEYYFRVYHSLCPISWVESW) enclose the CHCH domain. A Cx9C motif motif is present at residues 32–42 (CYQNFLDYHRC). 2 cysteine pairs are disulfide-bonded: Cys32/Cys67 and Cys42/Cys56. The short motif at 56 to 67 (CEYYFRVYHSLC) is the Cx10C motif element.

This sequence belongs to the cytochrome c oxidase subunit 6B family. As to quaternary structure, component of the cytochrome c oxidase (complex IV, CIV), a multisubunit enzyme composed of 14 subunits. The complex is composed of a catalytic core of 3 subunits MT-CO1, MT-CO2 and MT-CO3, encoded in the mitochondrial DNA, and 11 supernumerary subunits COX4I1 (or COX4I2), COX5A, COX5B, COX6A1 (or COX6A2), COX6B1 (or COX6B2), COX6C, COX7A2 (or COX7A1), COX7B, COX7C, COX8A and NDUFA4, which are encoded in the nuclear genome. The complex exists as a monomer or a dimer and forms supercomplexes (SCs) in the inner mitochondrial membrane with NADH-ubiquinone oxidoreductase (complex I, CI) and ubiquinol-cytochrome c oxidoreductase (cytochrome b-c1 complex, complex III, CIII), resulting in different assemblies (supercomplex SCI(1)III(2)IV(1) and megacomplex MCI(2)III(2)IV(2)). Testis specific. Weak expression in thymus and heart. Expressed in cancer cell lines.

The protein resides in the mitochondrion inner membrane. The protein operates within energy metabolism; oxidative phosphorylation. Component of the cytochrome c oxidase, the last enzyme in the mitochondrial electron transport chain which drives oxidative phosphorylation. The respiratory chain contains 3 multisubunit complexes succinate dehydrogenase (complex II, CII), ubiquinol-cytochrome c oxidoreductase (cytochrome b-c1 complex, complex III, CIII) and cytochrome c oxidase (complex IV, CIV), that cooperate to transfer electrons derived from NADH and succinate to molecular oxygen, creating an electrochemical gradient over the inner membrane that drives transmembrane transport and the ATP synthase. Cytochrome c oxidase is the component of the respiratory chain that catalyzes the reduction of oxygen to water. Electrons originating from reduced cytochrome c in the intermembrane space (IMS) are transferred via the dinuclear copper A center (CU(A)) of subunit 2 and heme A of subunit 1 to the active site in subunit 1, a binuclear center (BNC) formed by heme A3 and copper B (CU(B)). The BNC reduces molecular oxygen to 2 water molecules using 4 electrons from cytochrome c in the IMS and 4 protons from the mitochondrial matrix. The sequence is that of Cytochrome c oxidase subunit 6B2 (COX6B2) from Homo sapiens (Human).